Consider the following 790-residue polypeptide: cAMP and cAMP-inhibited cGMP 3',5'-cyclic phosphodiesterase 10A (790 aa).

3',5'-cyclic AMP is bound by residues 290–291 (RC), 334–335 (IA), threonine 368, glutamine 387, and histidine 519. In terms of domain architecture, PDEase spans 446 to 763 (TSEEWQGLMR…NQWEKVIRGE (318 aa)). Residue histidine 519 is the Proton donor of the active site. 3',5'-cyclic GMP is bound at residue histidine 519. 4 residues coordinate a divalent metal cation: histidine 523, histidine 557, aspartate 558, and aspartate 668. Glutamine 720 serves as a coordination point for 3',5'-cyclic AMP. Glutamine 720 serves as a coordination point for 3',5'-cyclic GMP. Residues 768–790 (WISGPGPAPSKSTPEKLNVKVED) form a disordered region. The span at 780–790 (TPEKLNVKVED) shows a compositional bias: basic and acidic residues.

The protein belongs to the cyclic nucleotide phosphodiesterase family. Homodimer. The cofactor is a divalent metal cation. As to expression, detected in striatum (at protein level). Detected in testis and brain.

It is found in the cytoplasm. It localises to the cytosol. The catalysed reaction is a nucleoside 3',5'-cyclic phosphate + H2O = a nucleoside 5'-phosphate + H(+). It catalyses the reaction 3',5'-cyclic AMP + H2O = AMP + H(+). It carries out the reaction 3',5'-cyclic GMP + H2O = GMP + H(+). The protein operates within purine metabolism; 3',5'-cyclic AMP degradation; AMP from 3',5'-cyclic AMP: step 1/1. It participates in purine metabolism; 3',5'-cyclic GMP degradation; GMP from 3',5'-cyclic GMP: step 1/1. Its function is as follows. Plays a role in signal transduction by regulating the intracellular concentration of cyclic nucleotides. Can hydrolyze both cAMP and cGMP, but has higher affinity for cAMP and is more efficient with cAMP as substrate. May play a critical role in regulating cAMP and cGMP levels in the striatum, a region of the brain that contributes to the control of movement and cognition. This chain is cAMP and cAMP-inhibited cGMP 3',5'-cyclic phosphodiesterase 10A (Pde10a), found in Mus musculus (Mouse).